Reading from the N-terminus, the 505-residue chain is Protein amnionless (505 aa).

The first 20 residues, 1-20 (MGLHWQWLIWALVGLHVALA), serve as a signal peptide directing secretion. Over 21–344 (TKWYGGGMDF…RPYNPNVSFS (324 aa)) the chain is Extracellular. Residues 345–365 (SIVLILFCMALVGLVSVVILA) traverse the membrane as a helical segment. The Cytoplasmic portion of the chain corresponds to 366-505 (HFMPENPYLN…CEADTDEETI (140 aa)). Residues 451–482 (GALEEAAKESQEQDEILSVPKMETGDLDARSV) are disordered. Over residues 473–482 (ETGDLDARSV) the composition is skewed to basic and acidic residues.

In terms of tissue distribution, specifically expressed in nephrocytes.

The protein resides in the cell membrane. Its function is as follows. Required in the nephrocyte for normal uptake of proteins and elimination of toxins, and for maintenance of endocytic trafficking structures. May function together with Cubn. This is Protein amnionless from Drosophila melanogaster (Fruit fly).